The following is an 878-amino-acid chain: Alanine--tRNA ligase (878 aa).

His566, His570, Cys668, and His672 together coordinate Zn(2+).

Belongs to the class-II aminoacyl-tRNA synthetase family. The cofactor is Zn(2+).

The protein resides in the cytoplasm. It carries out the reaction tRNA(Ala) + L-alanine + ATP = L-alanyl-tRNA(Ala) + AMP + diphosphate. Functionally, catalyzes the attachment of alanine to tRNA(Ala) in a two-step reaction: alanine is first activated by ATP to form Ala-AMP and then transferred to the acceptor end of tRNA(Ala). Also edits incorrectly charged Ser-tRNA(Ala) and Gly-tRNA(Ala) via its editing domain. This Bacillus velezensis (strain DSM 23117 / BGSC 10A6 / LMG 26770 / FZB42) (Bacillus amyloliquefaciens subsp. plantarum) protein is Alanine--tRNA ligase.